The sequence spans 222 residues: Peptide methionine sulfoxide reductase MsrA 1 (222 aa).

Cysteine 57 is an active-site residue.

Belongs to the MsrA Met sulfoxide reductase family.

The enzyme catalyses L-methionyl-[protein] + [thioredoxin]-disulfide + H2O = L-methionyl-(S)-S-oxide-[protein] + [thioredoxin]-dithiol. The catalysed reaction is [thioredoxin]-disulfide + L-methionine + H2O = L-methionine (S)-S-oxide + [thioredoxin]-dithiol. In terms of biological role, has an important function as a repair enzyme for proteins that have been inactivated by oxidation. Catalyzes the reversible oxidation-reduction of methionine sulfoxide in proteins to methionine. This chain is Peptide methionine sulfoxide reductase MsrA 1 (msrA1), found in Synechocystis sp. (strain ATCC 27184 / PCC 6803 / Kazusa).